A 747-amino-acid polypeptide reads, in one-letter code: 3',5'-cyclic-AMP phosphodiesterase 4D (747 aa).

Positions 1 to 28 are disordered; sequence MERDTCDVLSRSKSASEETLHSCNEEED. The segment covering 14 to 24 has biased composition (basic and acidic residues); that stretch reads SASEETLHSCN. A phosphoserine mark is found at S238, S240, S287, and S314. The interval 282–302 is disordered; that stretch reads EVEIPSPTQKEKEKKKRPMSQ. The PDEase domain occupies 325–654; that stretch reads VKTEQEDVLA…EWYQSTIPQS (330 aa). A Glycyl lysine isopeptide (Lys-Gly) (interchain with G-Cter in SUMO) cross-link involves residue K326. H401 (proton donor) is an active-site residue. Residue H401 participates in 3',5'-cyclic AMP binding. Position 401 (H401) interacts with AMP. 4 residues coordinate Zn(2+): H405, H441, D442, and D559. Residues D442, D559, N562, Q610, and F613 each coordinate AMP. Residue D442 participates in Mg(2+) binding. D442 is a binding site for Mn(2+). Q610 and F613 together coordinate 3',5'-cyclic AMP. The tract at residues 649-747 is disordered; sequence STIPQSPSPA…CVPDDCCPDT (99 aa). Polar residues predominate over residues 701–712; it reads CSDSKTLCTQDS. Residues 718–734 are compositionally biased toward acidic residues; sequence PLDEQVEEEAVAEEESQ.

This sequence belongs to the cyclic nucleotide phosphodiesterase family. PDE4 subfamily. Homodimer for the long isoforms. Isoforms with truncated N-termini are monomeric. Binds ARRB2. Interacts with PDE4DIP. Identified in a complex composed of RYR1, PDE4D, PKA, FKBP1A and protein phosphatase 1 (PP1). Interacts (via N-terminal region) with SHANK2 (via proline-rich region); the interaction is increased in a PKA-dependent manner. Requires Zn(2+) as cofactor. It depends on Mg(2+) as a cofactor. Mn(2+) serves as cofactor. In terms of processing, sumoylation of long isoforms by PIAS4 augments their activation by PKA phosphorylation and represses their inhibition by ERK phosphorylation. As to expression, expressed in brain (at protein level). Isoform 7 is detected in heart, brain, lung, kidney and testis.

The protein localises to the cytoplasm. The protein resides in the membrane. It localises to the cytoskeleton. It is found in the microtubule organizing center. Its subcellular location is the centrosome. The protein localises to the apical cell membrane. The enzyme catalyses 3',5'-cyclic AMP + H2O = AMP + H(+). It participates in purine metabolism; 3',5'-cyclic AMP degradation; AMP from 3',5'-cyclic AMP: step 1/1. Inhibited by rolipram. Activated by phosphatidic acid. In terms of biological role, hydrolyzes the second messenger cAMP, which is a key regulator of many important physiological processes. The chain is 3',5'-cyclic-AMP phosphodiesterase 4D (Pde4d) from Mus musculus (Mouse).